The chain runs to 119 residues: Protein TusC (119 aa).

Belongs to the DsrF/TusC family. In terms of assembly, heterohexamer, formed by a dimer of trimers. The hexameric TusBCD complex contains 2 copies each of TusB, TusC and TusD. The TusBCD complex interacts with TusE.

The protein resides in the cytoplasm. Part of a sulfur-relay system required for 2-thiolation of 5-methylaminomethyl-2-thiouridine (mnm(5)s(2)U) at tRNA wobble positions. This Buchnera aphidicola subsp. Acyrthosiphon pisum (strain APS) (Acyrthosiphon pisum symbiotic bacterium) protein is Protein TusC.